The primary structure comprises 197 residues: Xanthine phosphoribosyltransferase (197 aa).

Positions 20 and 27 each coordinate xanthine. 128 to 132 contributes to the 5-phospho-alpha-D-ribose 1-diphosphate binding site; that stretch reads ANGQA. Lys-156 serves as a coordination point for xanthine.

The protein belongs to the purine/pyrimidine phosphoribosyltransferase family. Xpt subfamily. In terms of assembly, homodimer.

The protein localises to the cytoplasm. The catalysed reaction is XMP + diphosphate = xanthine + 5-phospho-alpha-D-ribose 1-diphosphate. It participates in purine metabolism; XMP biosynthesis via salvage pathway; XMP from xanthine: step 1/1. In terms of biological role, converts the preformed base xanthine, a product of nucleic acid breakdown, to xanthosine 5'-monophosphate (XMP), so it can be reused for RNA or DNA synthesis. The chain is Xanthine phosphoribosyltransferase from Lactococcus lactis subsp. lactis (strain IL1403) (Streptococcus lactis).